Reading from the N-terminus, the 455-residue chain is Golgi pH regulator (455 aa).

The next 4 helical transmembrane spans lie at 46–66 (ITFAFSCTMFELIIFEILGAL), 79–99 (LYVILLVLIFVVPFYIGYFVV), 111–131 (LFACVVWFTFMYFFWKLGDPF), and 150–170 (VGVIGVTLMALLSGFGAVNCP). Residues asparagine 180 and asparagine 243 are each glycosylated (N-linked (GlcNAc...) asparagine). The next 4 membrane-spanning stretches (helical) occupy residues 290 to 310 (GYFFSIYCVWKIFMATINIVF), 343 to 363 (ISFILVGIIIVTSIRGLLITL), 378 to 398 (VIVLVLAQIMGMYFVSSVLLM), and 425 to 445 (WFDVIFLVSALSSILFLYLAH).

It belongs to the Golgi pH regulator (TC 1.A.38) family. As to quaternary structure, homotrimer.

The protein resides in the golgi apparatus membrane. It catalyses the reaction iodide(out) = iodide(in). The catalysed reaction is chloride(in) = chloride(out). The enzyme catalyses bromide(in) = bromide(out). It carries out the reaction fluoride(in) = fluoride(out). Its function is as follows. Voltage-gated channel that enables the transfer of anions such as iodide, chloride, bromide and fluoride which may function in counter-ion conductance and participates in Golgi acidification. This chain is Golgi pH regulator, found in Salmo salar (Atlantic salmon).